We begin with the raw amino-acid sequence, 334 residues long: UDP-N-acetylglucosamine--N-acetylmuramyl-(pentapeptide) pyrophosphoryl-undecaprenol N-acetylglucosamine transferase (334 aa).

UDP-N-acetyl-alpha-D-glucosamine-binding positions include 11–13, Asn-125, Ser-185, Ile-229, and Gln-274; that span reads TGG.

This sequence belongs to the glycosyltransferase 28 family. MurG subfamily.

It is found in the cell inner membrane. It catalyses the reaction di-trans,octa-cis-undecaprenyl diphospho-N-acetyl-alpha-D-muramoyl-L-alanyl-D-glutamyl-meso-2,6-diaminopimeloyl-D-alanyl-D-alanine + UDP-N-acetyl-alpha-D-glucosamine = di-trans,octa-cis-undecaprenyl diphospho-[N-acetyl-alpha-D-glucosaminyl-(1-&gt;4)]-N-acetyl-alpha-D-muramoyl-L-alanyl-D-glutamyl-meso-2,6-diaminopimeloyl-D-alanyl-D-alanine + UDP + H(+). The protein operates within cell wall biogenesis; peptidoglycan biosynthesis. In terms of biological role, cell wall formation. Catalyzes the transfer of a GlcNAc subunit on undecaprenyl-pyrophosphoryl-MurNAc-pentapeptide (lipid intermediate I) to form undecaprenyl-pyrophosphoryl-MurNAc-(pentapeptide)GlcNAc (lipid intermediate II). The polypeptide is UDP-N-acetylglucosamine--N-acetylmuramyl-(pentapeptide) pyrophosphoryl-undecaprenol N-acetylglucosamine transferase (Thermosipho africanus (strain TCF52B)).